The following is a 377-amino-acid chain: Gastricsin (377 aa).

Positions 1–5 are cleaved as a signal peptide; sequence QLLEA. Propeptides (activation peptide) lie at residues 6 to 31 and 32 to 48; these read AVVKVPLKKFKSIRETMKEKGLLGEF and LRTHKYDPAWKYHFGDL. The region spanning 62-374 is the Peptidase A1 domain; sequence YFGEISIGTP…DLSNNRVGFA (313 aa). D80 is an active-site residue. 2 disulfides stabilise this stretch: C93–C98 and C256–C260. Residue D265 is part of the active site. A disulfide bridge links C299 with C332.

Belongs to the peptidase A1 family. In terms of processing, each pepsinogen is converted to corresponding pepsin at pH 2.0 in part as a result of the release of a 47 AA activation segment and in part as a result of stepwise proteolytic cleavage via an intermediate form(s).

It localises to the secreted. The enzyme catalyses More restricted specificity than pepsin A, but shows preferential cleavage at Tyr-|-Xaa bonds. High activity on hemoglobin.. Functionally, hydrolyzes a variety of proteins. The sequence is that of Gastricsin (PGC) from Macaca fuscata fuscata (Japanese macaque).